Reading from the N-terminus, the 93-residue chain is Cell division protein FtsB (93 aa).

Over 1–3 (MRV) the chain is Cytoplasmic. Residues 4-21 (TLVVLLALFLALQYRLWF) form a helical membrane-spanning segment. Residues 22-93 (GKNSLPDYWR…FFRLVPDRNP (72 aa)) lie on the Periplasmic side of the membrane. A coiled-coil region spans residues 28–75 (DYWRLQQEVSNQKNTNENLERRNQLIYADIEDLREGEDALEERARNEL).

This sequence belongs to the FtsB family. In terms of assembly, part of a complex composed of FtsB, FtsL and FtsQ.

The protein localises to the cell inner membrane. Its function is as follows. Essential cell division protein. May link together the upstream cell division proteins, which are predominantly cytoplasmic, with the downstream cell division proteins, which are predominantly periplasmic. This chain is Cell division protein FtsB, found in Idiomarina loihiensis (strain ATCC BAA-735 / DSM 15497 / L2-TR).